Consider the following 608-residue polypeptide: Elongation factor 4 (608 aa).

The tr-type G domain maps to 11-193 (SKIRNFSIIA…QIVEKVPAPD (183 aa)). Residues 23 to 28 (DHGKST) and 140 to 143 (NKID) contribute to the GTP site.

It belongs to the TRAFAC class translation factor GTPase superfamily. Classic translation factor GTPase family. LepA subfamily.

Its subcellular location is the cell membrane. It catalyses the reaction GTP + H2O = GDP + phosphate + H(+). In terms of biological role, required for accurate and efficient protein synthesis under certain stress conditions. May act as a fidelity factor of the translation reaction, by catalyzing a one-codon backward translocation of tRNAs on improperly translocated ribosomes. Back-translocation proceeds from a post-translocation (POST) complex to a pre-translocation (PRE) complex, thus giving elongation factor G a second chance to translocate the tRNAs correctly. Binds to ribosomes in a GTP-dependent manner. The chain is Elongation factor 4 from Bacillus cytotoxicus (strain DSM 22905 / CIP 110041 / 391-98 / NVH 391-98).